A 436-amino-acid polypeptide reads, in one-letter code: Glutamyl-tRNA reductase (436 aa).

Substrate contacts are provided by residues 49–52 (TCNR), Ser-109, 114–116 (EGQ), and Gln-120. Cys-50 functions as the Nucleophile in the catalytic mechanism. 198 to 203 (GAGRMS) contributes to the NADP(+) binding site.

It belongs to the glutamyl-tRNA reductase family. As to quaternary structure, homodimer.

The catalysed reaction is (S)-4-amino-5-oxopentanoate + tRNA(Glu) + NADP(+) = L-glutamyl-tRNA(Glu) + NADPH + H(+). The protein operates within porphyrin-containing compound metabolism; protoporphyrin-IX biosynthesis; 5-aminolevulinate from L-glutamyl-tRNA(Glu): step 1/2. It functions in the pathway porphyrin-containing compound metabolism; chlorophyll biosynthesis. Functionally, catalyzes the NADPH-dependent reduction of glutamyl-tRNA(Glu) to glutamate 1-semialdehyde (GSA). This Prochlorococcus marinus (strain MIT 9313) protein is Glutamyl-tRNA reductase.